A 375-amino-acid chain; its full sequence is uncharacterized protein (375 aa).

A signal peptide spans 1–20 (MKNKLFIILIIFIILKIVIC). At 21-335 (QNTTPSKLIP…EKQVERKITP (315 aa)) the chain is on the extracellular side. The segment covering 30 to 42 (PQQQQKQKQQQTQ) has biased composition (low complexity). 2 disordered regions span residues 30-74 (PQQQ…QPQQ) and 113-253 (SQNV…PHNH). Over residues 43–53 (PHHHHHHHQQH) the composition is skewed to basic residues. The span at 54–74 (QQHQQQHQPNQQIKQQQQPQQ) shows a compositional bias: low complexity. Residues 120–151 (PPHHTQQRVPHHHGPNGAPHHHGPNGAPHHHG) are compositionally biased toward basic residues. Polar residues predominate over residues 168-180 (GHNTQGHVQTNHV). A compositionally biased stretch (low complexity) spans 181–220 (NNINKNNINNNNNNNNNNNNNNNNNNNNNINDNKNIRNNI). The helical transmembrane segment at 336-356 (IMVLYILLASTMVIQLFIMVF) threads the bilayer. At 357–375 (KQVKHIREINAKTTMESLL) the chain is on the cytoplasmic side.

It localises to the membrane. This is an uncharacterized protein from Dictyostelium discoideum (Social amoeba).